The sequence spans 80 residues: MSRSGQPPDLKKYMDKKLQIKLNANRMVTGTLRGFDQFMNLVVDNTVEVNGNDKTDIGMVVIRGNSIVTVEALEPVGRSS.

The 72-residue stretch at 5–76 (GQPPDLKKYM…IVTVEALEPV (72 aa)) folds into the Sm domain.

This sequence belongs to the snRNP Sm proteins family.

Its subcellular location is the nucleus. Probable common Sm protein, is found in U1 and U2 snRNPs and may be part of the spliceosome. The sequence is that of Probable small nuclear ribonucleoprotein G from Arabidopsis thaliana (Mouse-ear cress).